The sequence spans 219 residues: Thiamine-phosphate synthase (219 aa).

Residues 48–52 (QLREK) and Asn-80 contribute to the 4-amino-2-methyl-5-(diphosphooxymethyl)pyrimidine site. Mg(2+) contacts are provided by Asp-81 and Asp-100. Ser-119 serves as a coordination point for 4-amino-2-methyl-5-(diphosphooxymethyl)pyrimidine. 145–147 (TPT) contributes to the 2-[(2R,5Z)-2-carboxy-4-methylthiazol-5(2H)-ylidene]ethyl phosphate binding site. Position 148 (Lys-148) interacts with 4-amino-2-methyl-5-(diphosphooxymethyl)pyrimidine. 2-[(2R,5Z)-2-carboxy-4-methylthiazol-5(2H)-ylidene]ethyl phosphate-binding positions include Gly-176 and 196-197 (VS).

Belongs to the thiamine-phosphate synthase family. It depends on Mg(2+) as a cofactor.

It catalyses the reaction 2-[(2R,5Z)-2-carboxy-4-methylthiazol-5(2H)-ylidene]ethyl phosphate + 4-amino-2-methyl-5-(diphosphooxymethyl)pyrimidine + 2 H(+) = thiamine phosphate + CO2 + diphosphate. It carries out the reaction 2-(2-carboxy-4-methylthiazol-5-yl)ethyl phosphate + 4-amino-2-methyl-5-(diphosphooxymethyl)pyrimidine + 2 H(+) = thiamine phosphate + CO2 + diphosphate. The enzyme catalyses 4-methyl-5-(2-phosphooxyethyl)-thiazole + 4-amino-2-methyl-5-(diphosphooxymethyl)pyrimidine + H(+) = thiamine phosphate + diphosphate. Its pathway is cofactor biosynthesis; thiamine diphosphate biosynthesis; thiamine phosphate from 4-amino-2-methyl-5-diphosphomethylpyrimidine and 4-methyl-5-(2-phosphoethyl)-thiazole: step 1/1. Functionally, condenses 4-methyl-5-(beta-hydroxyethyl)thiazole monophosphate (THZ-P) and 2-methyl-4-amino-5-hydroxymethyl pyrimidine pyrophosphate (HMP-PP) to form thiamine monophosphate (TMP). The protein is Thiamine-phosphate synthase of Albidiferax ferrireducens (strain ATCC BAA-621 / DSM 15236 / T118) (Rhodoferax ferrireducens).